The chain runs to 556 residues: Glypican-4 (556 aa).

Positions 1–18 are cleaved as a signal peptide; it reads MARFGLPALLCTLAVLSA. Ser-357 bears the Phosphoserine mark. Ser-494, Ser-498, and Ser-500 each carry an O-linked (Xyl...) (glycosaminoglycan) serine glycan. Asn-514 is a glycosylation site (N-linked (GlcNAc...) asparagine). Ser-529 carries the GPI-anchor amidated serine lipid modification. A propeptide spans 530 to 556 (removed in mature form); the sequence is AGVRPGAQAYLLTVFCILFLVMQREWR.

Belongs to the glypican family.

It localises to the cell membrane. The protein localises to the secreted. The protein resides in the extracellular space. Cell surface proteoglycan that bears heparan sulfate. May be involved in the development of kidney tubules and of the central nervous system. The chain is Glypican-4 (GPC4) from Homo sapiens (Human).